The chain runs to 138 residues: Putative pre-16S rRNA nuclease (138 aa).

The protein belongs to the YqgF nuclease family.

The protein resides in the cytoplasm. Its function is as follows. Could be a nuclease involved in processing of the 5'-end of pre-16S rRNA. This is Putative pre-16S rRNA nuclease (yrrK) from Bacillus subtilis (strain 168).